The following is a 479-amino-acid chain: Aryl-phospho-beta-D-glucosidase BglA (479 aa).

Glu-176 serves as the catalytic Proton donor. Residue Glu-377 is the Nucleophile of the active site.

This sequence belongs to the glycosyl hydrolase 1 family.

It catalyses the reaction 6-phospho-beta-D-glucosyl-(1-&gt;4)-D-glucose + H2O = D-glucose 6-phosphate + D-glucose. Its function is as follows. Catalyzes the hydrolysis of aryl-phospho-beta-D-glucosides such as 4-methylumbelliferyl-phospho-beta-D-glucopyranoside (MUG-P), phosphoarbutin and phosphosalicin. Plays a major role in the utilization of arbutin or salicin as the sole carbon source. BglA and BglH are the major proteins contributing to hydrolysis of MUG-P by extracts of late-exponential-phase or stationary-phase B.subtilis cells. The protein is Aryl-phospho-beta-D-glucosidase BglA (bglA) of Bacillus subtilis (strain 168).